Consider the following 124-residue polypeptide: Small ribosomal subunit protein uS12 (124 aa).

Positions 1–32 are disordered; sequence MPTIQQLVRKGRKDKATKTKTPALKGSPQRRG. The residue at position 89 (aspartate 89) is a 3-methylthioaspartic acid. A disordered region spans residues 105–124; that stretch reads QGVRGRQQARSRYGAKKEKK. Over residues 111–124 the composition is skewed to basic residues; sequence QQARSRYGAKKEKK.

This sequence belongs to the universal ribosomal protein uS12 family. Part of the 30S ribosomal subunit. Contacts proteins S8 and S17. May interact with IF1 in the 30S initiation complex.

In terms of biological role, with S4 and S5 plays an important role in translational accuracy. Functionally, interacts with and stabilizes bases of the 16S rRNA that are involved in tRNA selection in the A site and with the mRNA backbone. Located at the interface of the 30S and 50S subunits, it traverses the body of the 30S subunit contacting proteins on the other side and probably holding the rRNA structure together. The combined cluster of proteins S8, S12 and S17 appears to hold together the shoulder and platform of the 30S subunit. This chain is Small ribosomal subunit protein uS12, found in Beutenbergia cavernae (strain ATCC BAA-8 / DSM 12333 / CCUG 43141 / JCM 11478 / NBRC 16432 / NCIMB 13614 / HKI 0122).